Here is a 467-residue protein sequence, read N- to C-terminus: Zinc finger and BTB domain-containing protein 43 (467 aa).

Position 1 is an N-acetylmethionine (Met1). Residues 33–97 (CDVSIVVQGH…SYTGRLVMPA (65 aa)) enclose the BTB domain. 2 disordered regions span residues 134 to 153 (LNHG…GLVE) and 162 to 225 (HTDF…SAEF). Composition is skewed to basic and acidic residues over residues 164 to 174 (DFPKAQELRDG) and 182 to 194 (KDEL…EHEY). Residues Lys182, Lys241, Lys247, Lys297, and Lys358 each participate in a glycyl lysine isopeptide (Lys-Gly) (interchain with G-Cter in SUMO2) cross-link. The C2H2-type 1; atypical zinc-finger motif lies at 373 to 394 (YPCQCGKSFTHKSQRDRHMSMH). Residues 400 to 422 (YGCGVCGKKFKMKHHLVGHMKIH) form a C2H2-type 2 zinc finger. Thr423 is modified (phosphothreonine). The C2H2-type 3; atypical zinc finger occupies 428-450 (YECNICAKRFMWRDSFHRHVTSC). Lys458 participates in a covalent cross-link: Glycyl lysine isopeptide (Lys-Gly) (interchain with G-Cter in SUMO2).

It belongs to the krueppel C2H2-type zinc-finger protein family. In terms of assembly, interacts with BDP1.

It is found in the nucleus. In terms of biological role, may be involved in transcriptional regulation. The polypeptide is Zinc finger and BTB domain-containing protein 43 (ZBTB43) (Homo sapiens (Human)).